A 219-amino-acid polypeptide reads, in one-letter code: MSRDASHAALRRRLAETHLRAEVYRDQTLQLHREGVSTQDPRFVGAFMAAKAAHLELEARLKSRARLEMMRQRATCVKIRVEEQAARRDFLTAHRRYLDPALSERLDAADDRLADQEEQLEEAAANASLWGDGDLADGWMSPGDSDLLVMWQLTSAPKVHTDAPSRPGSRPTYTPSAAGRPDAQAAPPPETAPSPEPAPGPAADPASGSGFARDCPDGE.

The tract at residues 159–219 is disordered; sequence VHTDAPSRPG…GFARDCPDGE (61 aa). Residues 186-202 show a composition bias toward pro residues; that stretch reads APPPETAPSPEPAPGPA.

This sequence belongs to the alphaherpesvirinae HHV-1 UL14 protein family. In terms of processing, phosphorylated.

It localises to the virion tegument. It is found in the host cytoplasm. The protein resides in the host nucleus. Contributes to the nuclear transport of the viral transcriptional activator VP16 during the early phase of infection. Therefore, participates indirectly in the regulation of the immediate-early gene expression. Additionally, seems to be important for efficient nuclear targeting of capsids. The chain is Tegument protein UL14 from Human herpesvirus 2 (strain HG52) (HHV-2).